An 87-amino-acid chain; its full sequence is Small ribosomal subunit protein bS20 (87 aa).

Positions 1–22 (MANSAGSKKRARQAVKSRAHNG) are disordered. Residues 7-19 (SKKRARQAVKSRA) show a composition bias toward basic residues.

Belongs to the bacterial ribosomal protein bS20 family.

Its function is as follows. Binds directly to 16S ribosomal RNA. In Marinomonas sp. (strain MWYL1), this protein is Small ribosomal subunit protein bS20.